Consider the following 205-residue polypeptide: Holliday junction branch migration complex subunit RuvA (205 aa).

The domain I stretch occupies residues 1–64; the sequence is MIGKLKGLID…EDQIKLFGFR (64 aa). Residues 65 to 143 are domain II; it reads SDLEREWFRL…AFASVDPAVV (79 aa). Residues 144–153 are flexible linker; sequence ALSGALDERS. Residues 153–205 form a domain III region; that stretch reads SAPRPVTDAISALVNLGYGQPQAAAAIASASRSAGEGAETAQLIKLGLKELSK.

The protein belongs to the RuvA family. As to quaternary structure, homotetramer. Forms an RuvA(8)-RuvB(12)-Holliday junction (HJ) complex. HJ DNA is sandwiched between 2 RuvA tetramers; dsDNA enters through RuvA and exits via RuvB. An RuvB hexamer assembles on each DNA strand where it exits the tetramer. Each RuvB hexamer is contacted by two RuvA subunits (via domain III) on 2 adjacent RuvB subunits; this complex drives branch migration. In the full resolvosome a probable DNA-RuvA(4)-RuvB(12)-RuvC(2) complex forms which resolves the HJ.

Its subcellular location is the cytoplasm. Its function is as follows. The RuvA-RuvB-RuvC complex processes Holliday junction (HJ) DNA during genetic recombination and DNA repair, while the RuvA-RuvB complex plays an important role in the rescue of blocked DNA replication forks via replication fork reversal (RFR). RuvA specifically binds to HJ cruciform DNA, conferring on it an open structure. The RuvB hexamer acts as an ATP-dependent pump, pulling dsDNA into and through the RuvAB complex. HJ branch migration allows RuvC to scan DNA until it finds its consensus sequence, where it cleaves and resolves the cruciform DNA. The protein is Holliday junction branch migration complex subunit RuvA of Rhodopseudomonas palustris (strain BisB18).